A 70-amino-acid chain; its full sequence is NADH dehydrogenase [ubiquinone] 1 alpha subcomplex subunit 1 (70 aa).

Residues 1 to 21 (MWFEILPGLSVMGVCLLIPGL) traverse the membrane as a helical segment.

The protein belongs to the complex I NDUFA1 subunit family. Complex I is composed of 45 different subunits. Primarily expressed in heart and skeletal muscle.

It is found in the mitochondrion inner membrane. In terms of biological role, accessory subunit of the mitochondrial membrane respiratory chain NADH dehydrogenase (Complex I), that is believed not to be involved in catalysis. Complex I functions in the transfer of electrons from NADH to the respiratory chain. The immediate electron acceptor for the enzyme is believed to be ubiquinone. The protein is NADH dehydrogenase [ubiquinone] 1 alpha subcomplex subunit 1 (NDUFA1) of Homo sapiens (Human).